Reading from the N-terminus, the 142-residue chain is Chorion class A protein Ld12 (142 aa).

Residues 1–18 (MNSFALLLVCIQACLVQS) form the signal peptide.

It belongs to the chorion protein family.

This protein is one of many from the eggshell of the gypsy moth. This is Chorion class A protein Ld12 from Lymantria dispar (Gypsy moth).